A 400-amino-acid polypeptide reads, in one-letter code: Enoyl-[acyl-carrier-protein] reductase [NADH] 1 (400 aa).

Residues 48 to 53 (GASSGY), 74 to 75 (FE), 111 to 112 (DA), and 139 to 140 (LA) contribute to the NAD(+) site. Tyr-225 contacts substrate. Tyr-235 functions as the Proton donor in the catalytic mechanism. NAD(+) is bound by residues Lys-244 and 273–275 (VVT).

It belongs to the TER reductase family. In terms of assembly, monomer.

The enzyme catalyses a 2,3-saturated acyl-[ACP] + NAD(+) = a (2E)-enoyl-[ACP] + NADH + H(+). It functions in the pathway lipid metabolism; fatty acid biosynthesis. Involved in the final reduction of the elongation cycle of fatty acid synthesis (FAS II). Catalyzes the reduction of a carbon-carbon double bond in an enoyl moiety that is covalently linked to an acyl carrier protein (ACP). The polypeptide is Enoyl-[acyl-carrier-protein] reductase [NADH] 1 (Vibrio vulnificus (strain CMCP6)).